Here is a 310-residue protein sequence, read N- to C-terminus: Methionyl-tRNA formyltransferase (310 aa).

111 to 114 (SLLP) contacts (6S)-5,6,7,8-tetrahydrofolate.

It belongs to the Fmt family.

It catalyses the reaction L-methionyl-tRNA(fMet) + (6R)-10-formyltetrahydrofolate = N-formyl-L-methionyl-tRNA(fMet) + (6S)-5,6,7,8-tetrahydrofolate + H(+). Functionally, attaches a formyl group to the free amino group of methionyl-tRNA(fMet). The formyl group appears to play a dual role in the initiator identity of N-formylmethionyl-tRNA by promoting its recognition by IF2 and preventing the misappropriation of this tRNA by the elongation apparatus. The chain is Methionyl-tRNA formyltransferase from Rhodopseudomonas palustris (strain TIE-1).